We begin with the raw amino-acid sequence, 72 residues long: UPF0154 protein BH2350 (72 aa).

The chain crosses the membrane as a helical span at residues Trp3–Ile23.

It belongs to the UPF0154 family.

The protein resides in the membrane. The sequence is that of UPF0154 protein BH2350 from Halalkalibacterium halodurans (strain ATCC BAA-125 / DSM 18197 / FERM 7344 / JCM 9153 / C-125) (Bacillus halodurans).